Here is a 548-residue protein sequence, read N- to C-terminus: CBS domain-containing protein CBSCBSPB4 (548 aa).

The span at 1-18 (MANQGGPSRKSLSFSGHS) shows a compositional bias: polar residues. The disordered stretch occupies residues 1–58 (MANQGGPSRKSLSFSGHSFQGRKKASENEGGGGGGSDLLPRRSLTSSRSSISLSGERS). Ser-18 carries the phosphoserine modification. Residues 37–56 (DLLPRRSLTSSRSSISLSGE) are compositionally biased toward low complexity. 4 consecutive CBS domains span residues 63-126 (VKRL…NLEE), 133-190 (MTKN…ERSV), 233-293 (IIPE…LPQE), and 301-358 (MTPN…AGST). One can recognise a PB1 domain in the interval 411 to 498 (PNTFAFKLQD…KGLKLHLDYT (88 aa)). Residues 521–543 (AAAYKTVAAGAALAAGLGVLVYL) traverse the membrane as a helical segment.

The protein resides in the membrane. In Arabidopsis thaliana (Mouse-ear cress), this protein is CBS domain-containing protein CBSCBSPB4 (CBSCBSPB4).